The sequence spans 562 residues: Oxygen-dependent choline dehydrogenase (562 aa).

Position 4 to 33 (4 to 33) interacts with FAD; it reads DYIIIGAGSAGNVLATRLTEDPNTTVLLLE. The active-site Proton acceptor is His473.

It belongs to the GMC oxidoreductase family. The cofactor is FAD.

The enzyme catalyses choline + A = betaine aldehyde + AH2. It catalyses the reaction betaine aldehyde + NAD(+) + H2O = glycine betaine + NADH + 2 H(+). The protein operates within amine and polyamine biosynthesis; betaine biosynthesis via choline pathway; betaine aldehyde from choline (cytochrome c reductase route): step 1/1. Involved in the biosynthesis of the osmoprotectant glycine betaine. Catalyzes the oxidation of choline to betaine aldehyde and betaine aldehyde to glycine betaine at the same rate. The sequence is that of Oxygen-dependent choline dehydrogenase from Escherichia coli O45:K1 (strain S88 / ExPEC).